Here is a 149-residue protein sequence, read N- to C-terminus: Large ribosomal subunit protein bL9 (149 aa).

This sequence belongs to the bacterial ribosomal protein bL9 family.

Functionally, binds to the 23S rRNA. The sequence is that of Large ribosomal subunit protein bL9 from Histophilus somni (strain 129Pt) (Haemophilus somnus).